A 483-amino-acid polypeptide reads, in one-letter code: Glutamyl-tRNA(Gln) amidotransferase subunit A (483 aa).

Catalysis depends on charge relay system residues Lys-77 and Ser-152. The active-site Acyl-ester intermediate is Ser-176.

It belongs to the amidase family. GatA subfamily. Heterotrimer of A, B and C subunits.

The catalysed reaction is L-glutamyl-tRNA(Gln) + L-glutamine + ATP + H2O = L-glutaminyl-tRNA(Gln) + L-glutamate + ADP + phosphate + H(+). Functionally, allows the formation of correctly charged Gln-tRNA(Gln) through the transamidation of misacylated Glu-tRNA(Gln) in organisms which lack glutaminyl-tRNA synthetase. The reaction takes place in the presence of glutamine and ATP through an activated gamma-phospho-Glu-tRNA(Gln). The chain is Glutamyl-tRNA(Gln) amidotransferase subunit A from Listeria monocytogenes serovar 1/2a (strain ATCC BAA-679 / EGD-e).